The following is a 281-amino-acid chain: Pantothenate synthetase (281 aa).

Met30–His37 is a binding site for ATP. Catalysis depends on His37, which acts as the Proton donor. Gln61 contributes to the (R)-pantoate binding site. Gln61 contributes to the beta-alanine binding site. Gly147–Asp150 serves as a coordination point for ATP. Gln153 is a (R)-pantoate binding site. ATP-binding positions include Val176 and Met184–Arg187.

Belongs to the pantothenate synthetase family. In terms of assembly, homodimer.

Its subcellular location is the cytoplasm. The catalysed reaction is (R)-pantoate + beta-alanine + ATP = (R)-pantothenate + AMP + diphosphate + H(+). It participates in cofactor biosynthesis; (R)-pantothenate biosynthesis; (R)-pantothenate from (R)-pantoate and beta-alanine: step 1/1. Catalyzes the condensation of pantoate with beta-alanine in an ATP-dependent reaction via a pantoyl-adenylate intermediate. The protein is Pantothenate synthetase of Oleidesulfovibrio alaskensis (strain ATCC BAA-1058 / DSM 17464 / G20) (Desulfovibrio alaskensis).